The primary structure comprises 530 residues: Glucose-6-phosphate isomerase (530 aa).

E322 functions as the Proton donor in the catalytic mechanism. Active-site residues include H351 and K455.

The protein belongs to the GPI family.

The protein localises to the cytoplasm. It catalyses the reaction alpha-D-glucose 6-phosphate = beta-D-fructose 6-phosphate. It functions in the pathway carbohydrate biosynthesis; gluconeogenesis. Its pathway is carbohydrate degradation; glycolysis; D-glyceraldehyde 3-phosphate and glycerone phosphate from D-glucose: step 2/4. Functionally, catalyzes the reversible isomerization of glucose-6-phosphate to fructose-6-phosphate. The chain is Glucose-6-phosphate isomerase from Geobacter sp. (strain M21).